Here is a 404-residue protein sequence, read N- to C-terminus: 4-hydroxy-3-methylbut-2-en-1-yl diphosphate synthase (ferredoxin) (404 aa).

4 residues coordinate [4Fe-4S] cluster: cysteine 313, cysteine 316, cysteine 347, and glutamate 354.

Belongs to the IspG family. [4Fe-4S] cluster is required as a cofactor.

The catalysed reaction is (2E)-4-hydroxy-3-methylbut-2-enyl diphosphate + 2 oxidized [2Fe-2S]-[ferredoxin] + H2O = 2-C-methyl-D-erythritol 2,4-cyclic diphosphate + 2 reduced [2Fe-2S]-[ferredoxin] + H(+). The protein operates within isoprenoid biosynthesis; isopentenyl diphosphate biosynthesis via DXP pathway; isopentenyl diphosphate from 1-deoxy-D-xylulose 5-phosphate: step 5/6. Functionally, converts 2C-methyl-D-erythritol 2,4-cyclodiphosphate (ME-2,4cPP) into 1-hydroxy-2-methyl-2-(E)-butenyl 4-diphosphate. This is 4-hydroxy-3-methylbut-2-en-1-yl diphosphate synthase (ferredoxin) from Crocosphaera subtropica (strain ATCC 51142 / BH68) (Cyanothece sp. (strain ATCC 51142)).